An 881-amino-acid polypeptide reads, in one-letter code: Alanine--tRNA ligase (881 aa).

Zn(2+) is bound by residues H564, H568, C666, and H670.

Belongs to the class-II aminoacyl-tRNA synthetase family. Zn(2+) serves as cofactor.

It localises to the cytoplasm. The enzyme catalyses tRNA(Ala) + L-alanine + ATP = L-alanyl-tRNA(Ala) + AMP + diphosphate. Functionally, catalyzes the attachment of alanine to tRNA(Ala) in a two-step reaction: alanine is first activated by ATP to form Ala-AMP and then transferred to the acceptor end of tRNA(Ala). Also edits incorrectly charged Ser-tRNA(Ala) and Gly-tRNA(Ala) via its editing domain. The polypeptide is Alanine--tRNA ligase (Caldicellulosiruptor saccharolyticus (strain ATCC 43494 / DSM 8903 / Tp8T 6331)).